Here is a 443-residue protein sequence, read N- to C-terminus: ATP-dependent protease ATPase subunit HslU (443 aa).

ATP is bound by residues Ile18 and 60–65 (GVGKTE). Positions 142–162 (LGFEASPSEESNATRQKFRKK) are disordered. ATP is bound by residues Asp256, Glu321, and Arg393.

Belongs to the ClpX chaperone family. HslU subfamily. A double ring-shaped homohexamer of HslV is capped on each side by a ring-shaped HslU homohexamer. The assembly of the HslU/HslV complex is dependent on binding of ATP.

The protein localises to the cytoplasm. In terms of biological role, ATPase subunit of a proteasome-like degradation complex; this subunit has chaperone activity. The binding of ATP and its subsequent hydrolysis by HslU are essential for unfolding of protein substrates subsequently hydrolyzed by HslV. HslU recognizes the N-terminal part of its protein substrates and unfolds these before they are guided to HslV for hydrolysis. The polypeptide is ATP-dependent protease ATPase subunit HslU (Nitrosomonas europaea (strain ATCC 19718 / CIP 103999 / KCTC 2705 / NBRC 14298)).